Here is a 453-residue protein sequence, read N- to C-terminus: UDP-N-acetylmuramate--L-alanyl-gamma-D-glutamyl-meso-2,6-diaminoheptandioate ligase (453 aa).

An ATP-binding site is contributed by 111 to 117 (GTHGKTT).

It belongs to the MurCDEF family. Mpl subfamily. Mg(2+) is required as a cofactor.

It carries out the reaction UDP-N-acetyl-alpha-D-muramate + L-alanyl-gamma-D-glutamyl-meso-2,6-diaminopimelate + ATP = UDP-N-acetyl-alpha-D-muramoyl-L-alanyl-gamma-D-glutamyl-meso-2,6-diaminopimelate + ADP + phosphate + H(+). Its pathway is cell wall biogenesis; peptidoglycan recycling. In terms of biological role, reutilizes the intact tripeptide L-alanyl-gamma-D-glutamyl-meso-diaminopimelate by linking it to UDP-N-acetylmuramate. This Haemophilus influenzae (strain ATCC 51907 / DSM 11121 / KW20 / Rd) protein is UDP-N-acetylmuramate--L-alanyl-gamma-D-glutamyl-meso-2,6-diaminoheptandioate ligase.